A 381-amino-acid polypeptide reads, in one-letter code: Acetyl-CoA:oxalate CoA-transferase (381 aa).

Residue His-233 is part of the active site.

The protein belongs to the CoA-transferase III family. As to quaternary structure, homodimer.

The enzyme catalyses oxalate + acetyl-CoA = oxalyl-CoA + acetate. Its function is as follows. Involved in the catabolism of oxalate and in the adapatation to low pH. ACOCT serves to prime the oxalate-induced acid tolerance response (ATR) cycle by producing substrate for oxalyl-CoA decarboxylase (OXC) and formyl-coenzyme A transferase (FCOCT). Catalyzes the reversible conversion of acetyl-CoA and oxalate to oxalyl-CoA and acetate. It can also use formyl-CoA and oxalate to produce oxalyl-CoA and formate with significantly reduced specific activity. The protein is Acetyl-CoA:oxalate CoA-transferase (yfdE) of Escherichia coli (strain K12).